The primary structure comprises 665 residues: Prelamin-A/C (665 aa).

N-acetylmethionine is present on Met-1. A disordered region spans residues 1-27; the sequence is METPSQRRPTRSGAQASSTPLSPTRIT. The segment at 1-33 is head; that stretch reads METPSQRRPTRSGAQASSTPLSPTRITRLQEKE. The segment at 1-130 is interaction with MLIP; sequence METPSQRRPT…TKKEGDLLAA (130 aa). Phosphothreonine is present on Thr-3. Ser-5 is modified (phosphoserine). A Phosphothreonine modification is found at Thr-10. Residues Ser-12 and Ser-18 each carry the phosphoserine modification. A Phosphothreonine modification is found at Thr-19. Ser-22 carries the phosphoserine modification. In terms of domain architecture, IF rod spans 31-387; that stretch reads EKEDLQELND…KLLEGEEERL (357 aa). The residue at position 32 (Lys-32) is an N6-acetyllysine; alternate. Lys-32 is modified (N6-succinyllysine; alternate). Residue Lys-32 forms a Glycyl lysine isopeptide (Lys-Gly) (interchain with G-Cter in SUMO2); alternate linkage. Positions 34-70 are coil 1A; sequence DLQELNDRLAVYIDRVRSLETENAGLRLRITESEEVV. Phosphoserine occurs at positions 51, 66, and 71. The segment at 71 to 80 is linker 1; that stretch reads SREVSGIKAA. Residues Lys-78 and Lys-97 each carry the N6-acetyllysine modification. The tract at residues 81–218 is coil 1B; that stretch reads YEAELGDARK…NIYSEELRET (138 aa). Residue Lys-97 forms a Glycyl lysine isopeptide (Lys-Gly) (interchain with G-Cter in SUMO2) linkage. Ser-107 bears the Phosphoserine mark. Residues Lys-108, Lys-114, Lys-123, Lys-135, Lys-144, and Lys-155 each carry the N6-acetyllysine modification. Lys-171 is modified (N6-acetyllysine; alternate). Position 171 is an N6-succinyllysine; alternate (Lys-171). Residue Lys-171 forms a Glycyl lysine isopeptide (Lys-Gly) (interchain with G-Cter in SUMO2); alternate linkage. An N6-acetyllysine mark is found at Lys-180, Lys-201, and Lys-208. Residue Lys-201 forms a Glycyl lysine isopeptide (Lys-Gly) (interchain with G-Cter in SUMO2); alternate linkage. Lys-201 is covalently cross-linked (Glycyl lysine isopeptide (Lys-Gly) (interchain with G-Cter in SUMO); alternate). Lys-208 participates in a covalent cross-link: Glycyl lysine isopeptide (Lys-Gly) (interchain with G-Cter in SUMO2). Ser-212 carries the post-translational modification Phosphoserine. Residues Lys-219 and Lys-233 each participate in a glycyl lysine isopeptide (Lys-Gly) (interchain with G-Cter in SUMO2) cross-link. A linker 2 region spans residues 219–242; it reads KRRHETRLVEIDNGKQREFESRLA. Lys-233, Lys-260, Lys-265, and Lys-270 each carry N6-acetyllysine. The segment at 243–383 is coil 2; that stretch reads DALQELRAQH…HAYRKLLEGE (141 aa). Lys-260 is covalently cross-linked (Glycyl lysine isopeptide (Lys-Gly) (interchain with G-Cter in SUMO2); alternate). Residue Lys-270 forms a Glycyl lysine isopeptide (Lys-Gly) (interchain with G-Cter in SUMO2); alternate linkage. Residues Ser-277, Ser-282, Ser-301, and Ser-307 each carry the phosphoserine modification. A Glycyl lysine isopeptide (Lys-Gly) (interchain with G-Cter in SUMO2); alternate cross-link involves residue Lys-311. 3 positions are modified to N6-acetyllysine: Lys-311, Lys-316, and Lys-341. Residues Lys-366 and Lys-378 each participate in a glycyl lysine isopeptide (Lys-Gly) (interchain with G-Cter in SUMO2) cross-link. Positions 384 to 442 are disordered; it reads EERLRLSPSPTSQRSRGRASSHSSQSQGGGSVTKKRKLESSESRSSFSQHARTSGRVAV. Residues 384–665 form a tail region; it reads EERLRLSPSP…TQSSQNCSIM (282 aa). 10 positions are modified to phosphoserine: Ser-390, Ser-392, Ser-395, Ser-398, Ser-403, Ser-404, Ser-406, Ser-407, Ser-409, and Ser-414. Positions 395–409 are enriched in low complexity; sequence SQRSRGRASSHSSQS. The residue at position 416 (Thr-416) is a Phosphothreonine. An N6-acetyllysine modification is found at Lys-417. Glycyl lysine isopeptide (Lys-Gly) (interchain with G-Cter in SUMO2) cross-links involve residues Lys-417 and Lys-420. Residues 417–422 carry the Nuclear localization signal motif; it reads KKRKLE. Phosphoserine occurs at positions 423, 426, 429, and 431. Positions 428–545 constitute an LTD domain; that stretch reads SSFSQHARTS…EEVAMRKLVR (118 aa). Lys-450 participates in a covalent cross-link: Glycyl lysine isopeptide (Lys-Gly) (interchain with G-Cter in SUMO2); alternate. N6-acetyllysine occurs at positions 450 and 457. Phosphoserine is present on residues Ser-458 and Ser-463. Glycyl lysine isopeptide (Lys-Gly) (interchain with G-Cter in SUMO2) cross-links involve residues Lys-470 and Lys-486. Position 486 is an N6-acetyllysine (Lys-486). The residue at position 496 (Thr-496) is a Phosphothreonine. Phosphoserine is present on Ser-500. Residues Thr-505 and Thr-510 each carry the phosphothreonine modification. At Ser-546 the chain carries Phosphoserine. Residue Thr-548 is modified to Phosphothreonine. The span at 552 to 561 shows a compositional bias: acidic residues; the sequence is DNDDEEEDGD. A disordered region spans residues 552-577; sequence DNDDEEEDGDELLHHHRGSHCSSSGD. A phosphoserine mark is found at Ser-570 and Ser-573. A Glycyl lysine isopeptide (Lys-Gly) (interchain with G-Cter in SUMO2); alternate cross-link involves residue Lys-599. A Glycyl lysine isopeptide (Lys-Gly) (interchain with G-Cter in SUMO1); alternate cross-link involves residue Lys-599. Residues Ser-613, Ser-614, Ser-617, and Ser-620 each carry the phosphoserine modification. Residues Ser-626 and Ser-629 are each glycosylated (O-linked (GlcNAc) serine). Phosphoserine is present on residues Ser-629, Ser-633, Ser-637, and Ser-653. A propeptide spans 648–662 (removed in Lamin-A/C form); sequence LLGNSSPRTQSSQNC. Cysteine methyl ester is present on Cys-662. The S-farnesyl cysteine moiety is linked to residue Cys-662. Positions 663–665 are cleaved as a propeptide — removed in Prelamin-A/C form and in Lamin-A/C form; that stretch reads SIM.

Belongs to the intermediate filament family. Homodimer of lamin A and lamin C. Lamin dimers then assemble into dimeric head-to-tail polymers. Ultimately, two head-to-tail polymers assemble laterally into a protofilament with a uniformly shaped rod of 3.5 nm in diameter. Interacts with lamin-associated polypeptides IA, IB and TMPO-alpha, RB1 and with emerin. Interacts with SREBF1, SREBF2, SUN2 and TMEM43. Interacts with TMEM201. Proteolytically processed isoform A interacts with NARF. Interacts with SUN1. Interacts with MLIP. Interacts with DMPK; may regulate nuclear envelope stability. Interacts with SUV39H1; the interaction increases stability of SUV39H1. Interacts with SYNE2. Interacts with ITSN1 isoform 2. Interacts with IFFO1; enables the formation of an interior nucleoskeleton that is recruited to DNA double-strand breaks. In terms of assembly, interacts with EMD. As to quaternary structure, interacts (via C-terminus) with LEMD2 (via N-terminus) (in vitro). Proteolytic cleavage of the C-terminal of 18 residues of prelamin-A/C results in the production of lamin-A/C. The prelamin-A/C maturation pathway includes farnesylation of CAAX motif by protein farnesyltransferase (FNTA and FNTB), removal of the last three amino acids (-AAX) by RCE1/FACE2 and/or ZMPSTE24, methylation of the C-terminal cysteine by ICMT and endoproteolytic removal of the last 15 C-terminal amino acids by ZMPSTE24. Proteolytic cleavage requires prior farnesylation and methylation, and absence of these blocks cleavage. Post-translationally, farnesylation of prelamin-A/C facilitates nuclear envelope targeting. In terms of processing, phosphorylation plays a key role in lamin organization, subcellular localization and nuclear envelope disintegration. Phosphorylation by CDK1 at Ser-22 and Ser-392 at the onset of mitosis drives lamin disassembly and nuclear envelope breakdown. Phosphorylation at Ser-22 and Ser-392 during interphase promotes localization to the nucleoplasm and regulates lamina assembly. Phosphorylation at Ser-22, Ser-392 and Ser-629 during interphase causes redistribution between the nucleus and the cytoplasm. Phosphorylation at Ser-22 by CDK1 regulates matrix stiffness. Phosphorylation status of Ser-22 determines its localization between double-strand break (DSB) sites and the nuclear matrix. Phosphorylated by ATR at Ser-282 in response to DNA damage, leading to lamin disassembly and nuclear envelope rupture. Phosphorylation also regulates stability in micronuclei arising from genome instability: phosphorylation at Ser-395 by ATR in response to genome instability and double-stranded DNA breaks primes LMNA for subsequent phosphorylation at Ser-392 by CDK1 and micronuclei envelope rupture. The rupture of micronuclear envelope triggers the cGAS-STING pathway thereby activating the type I interferon response and innate immunity. Acetylation by KAT8 is required for nuclear architecture. Post-translationally, sumoylation is necessary for the localization to the nuclear envelope.

It is found in the nucleus lamina. The protein localises to the nucleus envelope. The protein resides in the nucleus. It localises to the nucleoplasm. Its subcellular location is the nucleus matrix. Lamins are intermediate filament proteins that assemble into a filamentous meshwork, and which constitute the major components of the nuclear lamina, a fibrous layer on the nucleoplasmic side of the inner nuclear membrane. Lamins provide a framework for the nuclear envelope, bridging the nuclear envelope and chromatin, thereby playing an important role in nuclear assembly, chromatin organization, nuclear membrane and telomere dynamics. Lamin A and C also regulate matrix stiffness by conferring nuclear mechanical properties. The structural integrity of the lamina is strictly controlled by the cell cycle, as seen by the disintegration and formation of the nuclear envelope in prophase and telophase, respectively. Lamin A and C are present in equal amounts in the lamina of mammals. Also invoved in DNA repair: recruited by DNA repair proteins XRCC4 and IFFO1 to the DNA double-strand breaks (DSBs) to prevent chromosome translocation by immobilizing broken DNA ends. Required for normal development of peripheral nervous system and skeletal muscle and for muscle satellite cell proliferation. Required for osteoblastogenesis and bone formation. Also prevents fat infiltration of muscle and bone marrow, helping to maintain the volume and strength of skeletal muscle and bone. Required for cardiac homeostasis. In terms of biological role, prelamin-A/C can accelerate smooth muscle cell senescence. It acts to disrupt mitosis and induce DNA damage in vascular smooth muscle cells (VSMCs), leading to mitotic failure, genomic instability, and premature senescence. This is Prelamin-A/C (Lmna) from Rattus norvegicus (Rat).